The primary structure comprises 246 residues: 1-(5-phosphoribosyl)-5-[(5-phosphoribosylamino)methylideneamino] imidazole-4-carboxamide isomerase (246 aa).

The active-site Proton acceptor is aspartate 8. The active-site Proton donor is aspartate 130.

It belongs to the HisA/HisF family.

The protein localises to the cytoplasm. The catalysed reaction is 1-(5-phospho-beta-D-ribosyl)-5-[(5-phospho-beta-D-ribosylamino)methylideneamino]imidazole-4-carboxamide = 5-[(5-phospho-1-deoxy-D-ribulos-1-ylimino)methylamino]-1-(5-phospho-beta-D-ribosyl)imidazole-4-carboxamide. Its pathway is amino-acid biosynthesis; L-histidine biosynthesis; L-histidine from 5-phospho-alpha-D-ribose 1-diphosphate: step 4/9. This chain is 1-(5-phosphoribosyl)-5-[(5-phosphoribosylamino)methylideneamino] imidazole-4-carboxamide isomerase, found in Halorhodospira halophila (strain DSM 244 / SL1) (Ectothiorhodospira halophila (strain DSM 244 / SL1)).